The sequence spans 583 residues: Alpha-1,3-arabinosyltransferase XAT2 (583 aa).

The Cytoplasmic segment spans residues 1–21 (MKPVERAKLVRSLRQESRRLR). The chain crosses the membrane as a helical; Signal-anchor for type II membrane protein span at residues 22–42 (LLVLVIGFFLVTLTFVVISKP). The Lumenal segment spans residues 43–583 (DALLFNLNGR…LLEVLDQLNQ (541 aa)). Positions 73-178 (RRSADTFPAA…NGKQEDGKPN (106 aa)) are disordered. Basic and acidic residues-rich tracts occupy residues 102–121 (TSEEEKRLLSSEPEQGKNEE) and 135–146 (EDNKNGEEEGHT). The span at 149-160 (SKVTLPTVSNYT) shows a compositional bias: polar residues. Asn-158 is a glycosylation site (N-linked (GlcNAc...) asparagine). The segment covering 162 to 178 (RDAEDTDNGKQEDGKPN) has biased composition (basic and acidic residues). N-linked (GlcNAc...) asparagine glycans are attached at residues Asn-229, Asn-382, Asn-450, and Asn-485.

Belongs to the glycosyltransferase 61 family.

It is found in the golgi apparatus membrane. The protein operates within glycan metabolism. Glycosyltransferase involved in the arabinosylation of xylan, the major hemicellulose (non-cellulosic component) of primary and secondary walls of angiosperms. Possesses alpha-1,3-arabinosyltransferase activity, transferring an arabinofuranose residue to the xylan backbone. The chain is Alpha-1,3-arabinosyltransferase XAT2 from Oryza sativa subsp. japonica (Rice).